A 305-amino-acid polypeptide reads, in one-letter code: NAD-dependent protein deacylase sirtuin-5, mitochondrial (305 aa).

A mitochondrion-targeting transit peptide spans 1–32 (MIVRQLWCSRGSTSHLCAAVRLNWRSPKMTRP). One can recognise a Deacetylase sirtuin-type domain in the interval 33 to 303 (SSDLTAFREH…PPALERHESE (271 aa)). Residue 54–73 (GAGVSAESGVPTFRGPGGFW) participates in NAD(+) binding. The substrate site is built by Tyr98 and Arg101. 136–139 (QNID) provides a ligand contact to NAD(+). The active-site Proton acceptor is His154. Zn(2+) contacts are provided by Cys162, Cys165, Cys203, and Cys208. Residues 245 to 247 (GTS), 271 to 273 (NME), and Cys289 contribute to the NAD(+) site.

Belongs to the sirtuin family. Class III subfamily. Zn(2+) serves as cofactor.

It is found in the mitochondrion. The protein resides in the cytoplasm. It localises to the cytosol. Its subcellular location is the nucleus. The enzyme catalyses N(6)-malonyl-L-lysyl-[protein] + NAD(+) + H2O = 2''-O-malonyl-ADP-D-ribose + nicotinamide + L-lysyl-[protein]. The catalysed reaction is N(6)-succinyl-L-lysyl-[protein] + NAD(+) + H2O = 2''-O-succinyl-ADP-D-ribose + nicotinamide + L-lysyl-[protein]. It carries out the reaction N(6)-glutaryl-L-lysyl-[protein] + NAD(+) + H2O = 2''-O-glutaryl-ADP-D-ribose + nicotinamide + L-lysyl-[protein]. In terms of biological role, NAD-dependent lysine demalonylase, desuccinylase and deglutarylase that specifically removes malonyl, succinyl and glutaryl groups on target proteins. Has weak NAD-dependent protein deacetylase activity; however this activity may not be physiologically relevant in vivo. The chain is NAD-dependent protein deacylase sirtuin-5, mitochondrial (sirt5) from Danio rerio (Zebrafish).